The sequence spans 248 residues: 1-(5-phosphoribosyl)-5-[(5-phosphoribosylamino)methylideneamino] imidazole-4-carboxamide isomerase (248 aa).

The Proton acceptor role is filled by Asp8. The active-site Proton donor is Asp129.

It belongs to the HisA/HisF family.

Its subcellular location is the cytoplasm. It catalyses the reaction 1-(5-phospho-beta-D-ribosyl)-5-[(5-phospho-beta-D-ribosylamino)methylideneamino]imidazole-4-carboxamide = 5-[(5-phospho-1-deoxy-D-ribulos-1-ylimino)methylamino]-1-(5-phospho-beta-D-ribosyl)imidazole-4-carboxamide. It participates in amino-acid biosynthesis; L-histidine biosynthesis; L-histidine from 5-phospho-alpha-D-ribose 1-diphosphate: step 4/9. The protein is 1-(5-phosphoribosyl)-5-[(5-phosphoribosylamino)methylideneamino] imidazole-4-carboxamide isomerase of Sinorhizobium medicae (strain WSM419) (Ensifer medicae).